Reading from the N-terminus, the 428-residue chain is Chaperone SurA (428 aa).

A signal peptide spans 1–13 (MLGALLLSGAVHA). PpiC domains follow at residues 164–265 (SEEF…KLLE) and 276–375 (RDEV…EVLG).

It localises to the periplasm. The enzyme catalyses [protein]-peptidylproline (omega=180) = [protein]-peptidylproline (omega=0). In terms of biological role, chaperone involved in the correct folding and assembly of outer membrane proteins. Recognizes specific patterns of aromatic residues and the orientation of their side chains, which are found more frequently in integral outer membrane proteins. May act in both early periplasmic and late outer membrane-associated steps of protein maturation. The chain is Chaperone SurA from Pseudomonas savastanoi pv. phaseolicola (strain 1448A / Race 6) (Pseudomonas syringae pv. phaseolicola (strain 1448A / Race 6)).